Consider the following 607-residue polypeptide: Type 3 secretion system secretin (607 aa).

Residues 1–33 form the signal peptide; it reads MAPACTTAHRRRAPLAAVLMLSLLPLLSPHADA. Positions 277–332 are disordered; it reads ASSSDRVPVSPPLPGSGAAAAAGSPASVWPELSKGRRDESNPIDAGGGAELASDAP. A compositionally biased stretch (low complexity) spans 291-306; that stretch reads GSGAAAAAGSPASVWP.

It belongs to the bacterial secretin family. T3SS SctC subfamily. In terms of assembly, the core secretion machinery of the T3SS is composed of approximately 20 different proteins, including cytoplasmic components, a base, an export apparatus and a needle. This subunit is part of the base, which anchors the injectisome in the bacterial cell envelope. Forms a stable homooligomeric complex.

It localises to the cell outer membrane. Component of the type III secretion system (T3SS), also called injectisome, which is used to inject bacterial effector proteins into eukaryotic host cells. Forms a ring-shaped multimeric structure with an apparent central pore in the outer membrane. Necessary for both basic pathogenicity and the induction of the hypersensitive response in resistant plants. The sequence is that of Type 3 secretion system secretin from Xanthomonas euvesicatoria.